Reading from the N-terminus, the 631-residue chain is 1-deoxy-D-xylulose-5-phosphate synthase (631 aa).

Thiamine diphosphate-binding positions include His76 and 117-119 (AHS). Asp148 provides a ligand contact to Mg(2+). Thiamine diphosphate is bound by residues 149-150 (GA), Asn177, Tyr284, and Glu365. Asn177 is a binding site for Mg(2+).

The protein belongs to the transketolase family. DXPS subfamily. As to quaternary structure, homodimer. Mg(2+) is required as a cofactor. It depends on thiamine diphosphate as a cofactor.

It catalyses the reaction D-glyceraldehyde 3-phosphate + pyruvate + H(+) = 1-deoxy-D-xylulose 5-phosphate + CO2. It participates in metabolic intermediate biosynthesis; 1-deoxy-D-xylulose 5-phosphate biosynthesis; 1-deoxy-D-xylulose 5-phosphate from D-glyceraldehyde 3-phosphate and pyruvate: step 1/1. Its function is as follows. Catalyzes the acyloin condensation reaction between C atoms 2 and 3 of pyruvate and glyceraldehyde 3-phosphate to yield 1-deoxy-D-xylulose-5-phosphate (DXP). The polypeptide is 1-deoxy-D-xylulose-5-phosphate synthase (Methylibium petroleiphilum (strain ATCC BAA-1232 / LMG 22953 / PM1)).